A 276-amino-acid polypeptide reads, in one-letter code: Transmembrane protein 45B (276 aa).

Transmembrane regions (helical) follow at residues 7 to 27, 48 to 68, 95 to 115, 147 to 167, 181 to 201, and 213 to 233; these read HALPGSFFLIVGLWWSLKYPL, IIEAAIRTLFAVIGILVEQFV, LFFAVSGIMDMLTYLITHVPL, IHSLLLYTVFGGALSLAVEVV, LLLLQGTWFWQIGFVLFPPFG, and IMFVTMCFCWHYLAALCILAA. Serine 271 and serine 273 each carry phosphoserine.

It belongs to the TMEM45 family.

It localises to the endosome membrane. The protein localises to the lysosome membrane. It is found in the golgi apparatus. Its subcellular location is the trans-Golgi network membrane. Its function is as follows. Plays a role in innate immunity. The sequence is that of Transmembrane protein 45B (TMEM45B) from Bos taurus (Bovine).